Reading from the N-terminus, the 140-residue chain is MGSSLVSVAEQLLKDLQRTYSEIKQIPDDLLIALRFVFGPCALQALDLVDQHSVTCVSSPSGRKAFQVLGGSGRLYTCFTSCHYCPCPAFSFTVLRRNESLMCKHLLAVILSQAMGLCQQEQVSDQQMTHILSRQPEAST.

An SWIM-type zinc finger spans residues 76-114 (YTCFTSCHYCPCPAFSFTVLRRNESLMCKHLLAVILSQA).

Belongs to the SWS1 family.

The protein resides in the nucleus. Functionally, involved in early stages of the homologous recombination repair (HRR) pathway of double-stranded DNA breaks arising during DNA replication or induced by DNA-damaging agents. In Danio rerio (Zebrafish), this protein is Zinc finger SWIM domain-containing protein 7 (zswim7).